Reading from the N-terminus, the 542-residue chain is Chaperonin GroEL 2 (542 aa).

ATP is bound by residues 30 to 33 (TLGP), K51, 87 to 91 (DGTTT), G415, and D496.

The protein belongs to the chaperonin (HSP60) family. As to quaternary structure, forms a cylinder of 14 subunits composed of two heptameric rings stacked back-to-back. Interacts with the co-chaperonin GroES.

It is found in the cytoplasm. It catalyses the reaction ATP + H2O + a folded polypeptide = ADP + phosphate + an unfolded polypeptide.. Functionally, together with its co-chaperonin GroES, plays an essential role in assisting protein folding. The GroEL-GroES system forms a nano-cage that allows encapsulation of the non-native substrate proteins and provides a physical environment optimized to promote and accelerate protein folding. This is Chaperonin GroEL 2 from Sinorhizobium fredii (strain NBRC 101917 / NGR234).